The chain runs to 126 residues: MPSPDKEMDKVLLIGLGGFLGAVCRFLICEHVDGQLGILSVNVLGSFMLGMIMYDAEYLSFIGPKGRLAFGTGFIGAFTTFSTFAVQSFSMAFLPALGNISANLFLTLTGVFFGRSFIKALSSREI.

Transmembrane regions (helical) follow at residues 11-31 (VLLIGLGGFLGAVCRFLICEH), 36-56 (LGILSVNVLGSFMLGMIMYDA), 69-89 (AFGTGFIGAFTTFSTFAVQSF), and 93-113 (FLPALGNISANLFLTLTGVFF). Residues Gly-76 and Thr-79 each contribute to the Na(+) site.

This sequence belongs to the fluoride channel Fluc/FEX (TC 1.A.43) family.

The protein resides in the cell membrane. The catalysed reaction is fluoride(in) = fluoride(out). With respect to regulation, na(+) is not transported, but it plays an essential structural role and its presence is essential for fluoride channel function. Fluoride-specific ion channel. Important for reducing fluoride concentration in the cell, thus reducing its toxicity. This chain is Fluoride-specific ion channel FluC 2, found in Methanosarcina mazei (strain ATCC BAA-159 / DSM 3647 / Goe1 / Go1 / JCM 11833 / OCM 88) (Methanosarcina frisia).